Consider the following 1846-residue polypeptide: Peripheral-type benzodiazepine receptor-associated protein 1 (1846 aa).

Disordered stretches follow at residues 57–97 (EESS…GYSC), 281–318 (NQRE…DDVE), and 560–628 (GPKD…SEVE). Over residues 576–587 (PKSSEPALTTLT) the composition is skewed to polar residues. The segment covering 599 to 612 (SLSNSSRSESIHNS) has biased composition (low complexity). One can recognise an SH3 1 domain in the interval 649–716 (ARIQVFLARY…PSNFVERVSD (68 aa)). The disordered stretch occupies residues 726 to 785 (ELADSSHSSGPELSFLSGGGGGCSSGGQSSGGRSQPRPEEEAAGDELSLSPPPEGLGEPL). Gly residues predominate over residues 742–755 (SGGGGGCSSGGQSS). Fibronectin type-III domains follow at residues 787 to 878 (VPYP…AGAG), 880 to 972 (VPSQ…TLPA), and 977 to 1075 (APLD…PALA). Disordered regions lie at residues 1084–1107 (SCLS…GLGD), 1163–1219 (EPTL…LDSG), 1243–1302 (HSRN…SDEE), 1322–1476 (SIPE…PESS), 1492–1617 (YDSE…QDLP), 1704–1755 (LTEA…AAQK), and 1812–1846 (VPSN…RVQC). Over residues 1202 to 1219 (TQKKPSIEACHGGDLDSG) the composition is skewed to basic and acidic residues. The span at 1251 to 1265 (DIQEEEEEEEEEEEE) shows a compositional bias: acidic residues. Residues 1270-1283 (PCSSQKQVAGNSIR) are compositionally biased toward polar residues. Over residues 1324–1335 (PEEEEEEEEEEG) the composition is skewed to acidic residues. Basic and acidic residues-rich tracts occupy residues 1411-1420 (RPQDPREHCS) and 1545-1577 (AWEK…ESRG). The SH3 2 domain occupies 1616–1684 (LPVRVFVALF…PCNMVAEVAV (69 aa)). Polar residues predominate over residues 1705 to 1719 (TEASGNGPSVYSSAH). Residues 1755 to 1822 (KTSRPMVAAF…PSNFLEGPGP (68 aa)) enclose the SH3 3 domain. A compositionally biased stretch (low complexity) spans 1817 to 1830 (LEGPGPESGSLESG).

Belongs to the RIMBP family. As to quaternary structure, interacts with RIMS1 and RIMS2. Interacts with TSPO. Interacts with CACNA1A. Predominantly expressed in the brain.

Its subcellular location is the cytoplasm. The protein localises to the mitochondrion. Functionally, required for synaptic transmission regulation. It probably controls the recruitement of voltage-gated calcium channels to the presynaptic membrane, and modulates neurotransmitter release. This chain is Peripheral-type benzodiazepine receptor-associated protein 1, found in Mus musculus (Mouse).